The chain runs to 469 residues: Aspartyl/glutamyl-tRNA(Asn/Gln) amidotransferase subunit B (469 aa).

It belongs to the GatB/GatE family. GatB subfamily. Heterotrimer of A, B and C subunits.

The catalysed reaction is L-glutamyl-tRNA(Gln) + L-glutamine + ATP + H2O = L-glutaminyl-tRNA(Gln) + L-glutamate + ADP + phosphate + H(+). It catalyses the reaction L-aspartyl-tRNA(Asn) + L-glutamine + ATP + H2O = L-asparaginyl-tRNA(Asn) + L-glutamate + ADP + phosphate + 2 H(+). Functionally, allows the formation of correctly charged Asn-tRNA(Asn) or Gln-tRNA(Gln) through the transamidation of misacylated Asp-tRNA(Asn) or Glu-tRNA(Gln) in organisms which lack either or both of asparaginyl-tRNA or glutaminyl-tRNA synthetases. The reaction takes place in the presence of glutamine and ATP through an activated phospho-Asp-tRNA(Asn) or phospho-Glu-tRNA(Gln). The protein is Aspartyl/glutamyl-tRNA(Asn/Gln) amidotransferase subunit B of Methanococcus aeolicus (strain ATCC BAA-1280 / DSM 17508 / OCM 812 / Nankai-3).